A 306-amino-acid chain; its full sequence is Acetylglutamate kinase (306 aa).

Residues 79–80, arginine 101, and asparagine 203 each bind substrate; that span reads GG.

The protein belongs to the acetylglutamate kinase family. ArgB subfamily.

It is found in the cytoplasm. It carries out the reaction N-acetyl-L-glutamate + ATP = N-acetyl-L-glutamyl 5-phosphate + ADP. It functions in the pathway amino-acid biosynthesis; L-arginine biosynthesis; N(2)-acetyl-L-ornithine from L-glutamate: step 2/4. Functionally, catalyzes the ATP-dependent phosphorylation of N-acetyl-L-glutamate. The polypeptide is Acetylglutamate kinase (Polaromonas naphthalenivorans (strain CJ2)).